We begin with the raw amino-acid sequence, 325 residues long: Probable tRNA pseudouridine synthase B (325 aa).

Aspartate 71 serves as the catalytic Nucleophile. The PUA domain maps to 238–313 (LPKIYVKDSA…VAASIERVIM (76 aa)).

It belongs to the pseudouridine synthase TruB family. Type 2 subfamily.

It catalyses the reaction uridine(55) in tRNA = pseudouridine(55) in tRNA. Functionally, could be responsible for synthesis of pseudouridine from uracil-55 in the psi GC loop of transfer RNAs. The polypeptide is Probable tRNA pseudouridine synthase B (Korarchaeum cryptofilum (strain OPF8)).